The primary structure comprises 652 residues: Sodium-dependent nutrient amino acid transporter 1 (652 aa).

The interval 1–54 (MELKGVHQQNGTSNGTGAVGAEGESAPPTAPATAEAAASLETTTEKVDAEQQKP) is disordered. At 1–58 (MELKGVHQQNGTSNGTGAVGAEGESAPPTAPATAEAAASLETTTEKVDAEQQKPERTN) the chain is on the cytoplasmic side. Residues 7–16 (HQQNGTSNGT) are compositionally biased toward polar residues. Residues 21-42 (AEGESAPPTAPATAEAAASLET) show a composition bias toward low complexity. A compositionally biased stretch (basic and acidic residues) spans 43–54 (TTEKVDAEQQKP). A run of 4 helical transmembrane segments spans residues 59–79 (WGNG…LGNV), 92–112 (GAFL…MYYL), 130–150 (VVPG…CIIT), and 155–175 (LLAL…PWSY). Asparagine 201 and asparagine 204 each carry an N-linked (GlcNAc...) asparagine glycan. 9 helical membrane passes run 240-260 (PDWK…LVIM), 269-289 (AAYF…VRAV), 318-338 (AVVQ…MFAS), 352-372 (IVTT…FAIL), 412-432 (LFSV…IVAL), 458-478 (ICGF…ILTL), 485-505 (TYVV…IYGM), 527-547 (CWSF…MVTI), and 564-584 (AGWL…MWYI).

The protein belongs to the sodium:neurotransmitter symporter (SNF) (TC 2.A.22) family.

The protein resides in the membrane. In terms of biological role, unusual broad substrate spectrum amino acid:sodium cotransporter that promotes absorption of the D isomers of essential amino acids. Neutral amino acids are the preferred substrates, especially methionine and phenylalanine. In Drosophila persimilis (Fruit fly), this protein is Sodium-dependent nutrient amino acid transporter 1.